A 283-amino-acid chain; its full sequence is NifU-like protein 4, mitochondrial (283 aa).

A mitochondrion-targeting transit peptide spans Met1–Leu48.

Belongs to the NifU family. In terms of tissue distribution, predominantly expressed in roots.

Its subcellular location is the mitochondrion. Functionally, molecular scaffold for [Fe-S] cluster assembly of mitochondrial iron-sulfur proteins. The protein is NifU-like protein 4, mitochondrial (NIFU4) of Arabidopsis thaliana (Mouse-ear cress).